Consider the following 205-residue polypeptide: DNA-directed RNA polymerase subunit 5 (205 aa).

It belongs to the archaeal Rpo5/eukaryotic RPB5 RNA polymerase subunit family.

Its subcellular location is the virion. It carries out the reaction RNA(n) + a ribonucleoside 5'-triphosphate = RNA(n+1) + diphosphate. Its function is as follows. DNA-dependent RNA polymerase catalyzes the transcription of DNA into RNA using the four ribonucleoside triphosphates as substrates. The polypeptide is DNA-directed RNA polymerase subunit 5 (Acanthamoeba polyphaga (Amoeba)).